The primary structure comprises 154 residues: MANKTQLRVEAINNGTVIDHIPANIGIKVLKLFQMDKSAERVTVGLNLPSSALGAKDLLKIENTFITPEQASKLALYAPHATVNQIENYEVVKKIPLVLPEQITGVFECPNSNCITHGEPVDSSFKVLTKKEDIHLKCKYCEKVYSREVVTDLN.

Residues Cys109, Cys114, Cys138, and Cys141 each contribute to the Zn(2+) site.

It belongs to the PyrI family. As to quaternary structure, contains catalytic and regulatory chains. Zn(2+) serves as cofactor.

Its function is as follows. Involved in allosteric regulation of aspartate carbamoyltransferase. The chain is Aspartate carbamoyltransferase regulatory chain from Aliivibrio fischeri (strain ATCC 700601 / ES114) (Vibrio fischeri).